The chain runs to 349 residues: MSRNELFDVTVIGGGPAGLYSAFYSGLRGMKAKIIEYQPMLGGKVHVYPEKMIWDVGGLTPISGAKLIEQLVQQGLTFHPEVLLNEKVESIARNEEGLFELHTAASGVHLSKTVIVAVGGGILNPQKLQIEGAERFEVSNLNYTVKSLQHFKDKTVIVSGGGNSAVDWANELEPVAKKVYLAYRKDALSGHEAQVDQLLNSSVSCFFHTEITKLIASEDHEVIERVELTNAQTGEVMELPVDEVVINHGYERDTSLLENSRLDVTRVDDYYIAGTSNCQSSVPGLYAAGDIVHYEGKLHLIAGAFQDAANAVNSAKRFIDPEAHKSAMVSSHNEVFKERNRELVKKMFV.

FAD is bound by residues Glu-36, Lys-44, Tyr-48, Val-88, Leu-123, Asp-290, and Ser-331.

This sequence belongs to the ferredoxin--NADP reductase type 2 family. In terms of assembly, homodimer. Requires FAD as cofactor.

The catalysed reaction is 2 reduced [2Fe-2S]-[ferredoxin] + NADP(+) + H(+) = 2 oxidized [2Fe-2S]-[ferredoxin] + NADPH. This chain is Ferredoxin--NADP reductase 1, found in Bacillus licheniformis (strain ATCC 14580 / DSM 13 / JCM 2505 / CCUG 7422 / NBRC 12200 / NCIMB 9375 / NCTC 10341 / NRRL NRS-1264 / Gibson 46).